The sequence spans 259 residues: Zinc import ATP-binding protein ZnuC (259 aa).

One can recognise an ABC transporter domain in the interval V6–G223. G38–S45 lines the ATP pocket. The segment at A230–D259 is disordered. Basic and acidic residues predominate over residues T233–D259.

Belongs to the ABC transporter superfamily. Zinc importer (TC 3.A.1.15.5) family. As to quaternary structure, the complex is composed of two ATP-binding proteins (ZnuC), two transmembrane proteins (ZnuB) and a solute-binding protein (ZnuA).

The protein resides in the cell inner membrane. It carries out the reaction Zn(2+)(out) + ATP(in) + H2O(in) = Zn(2+)(in) + ADP(in) + phosphate(in) + H(+)(in). Part of the ABC transporter complex ZnuABC involved in zinc import. Responsible for energy coupling to the transport system. The chain is Zinc import ATP-binding protein ZnuC from Alcanivorax borkumensis (strain ATCC 700651 / DSM 11573 / NCIMB 13689 / SK2).